An 83-amino-acid polypeptide reads, in one-letter code: Kappa-theraphotoxin-Cg2b (83 aa).

The signal sequence occupies residues 1–21 (MKGSAFAIILGLVVLCACSFA). Positions 22-53 (EDEQDQFASPNELLRSMFLESRHELIPEVEGR) are excised as a propeptide. Intrachain disulfides connect C55/C69, C62/C74, and C68/C78.

Belongs to the neurotoxin 30 (phrixotoxin) family. Expressed by the venom gland.

The protein localises to the secreted. In terms of biological role, probable ion channel inhibitor. The chain is Kappa-theraphotoxin-Cg2b from Chilobrachys guangxiensis (Chinese earth tiger tarantula).